The chain runs to 233 residues: MAAPTAAGLCPRLRAWLPRLTQVRWSRYNPSFLEPEVNKELYQKPFNELSEEEKEKQELKAVHPIKAAPPSISSSVFSDPMISKFTNMMMKDGNKVLARSLMAQTLENIKRKQLEKYHRAPDDEKERVECNPYVIFHQALKNCQPIIGLSNITRGGKTYQVPVPLKDNRKRFLAMKWLITECRENKHRRTLMPEKLSEELIQAFNNEGPIIKKKHVLHKMAEANRAYAHFRWW.

A mitochondrion-targeting transit peptide spans 1-28; it reads MAAPTAAGLCPRLRAWLPRLTQVRWSRY.

This sequence belongs to the universal ribosomal protein uS7 family. In terms of assembly, component of the mitochondrial ribosome small subunit (28S) which comprises a 12S rRNA and about 30 distinct proteins.

It is found in the mitochondrion. This is Small ribosomal subunit protein uS7m (MRPS7) from Gallus gallus (Chicken).